The chain runs to 555 residues: GMP synthase [glutamine-hydrolyzing] (555 aa).

One can recognise a Glutamine amidotransferase type-1 domain in the interval 8–234; sequence KILVLNFGSQ…AYNICKCKKQ (227 aa). The Nucleophile; for GATase activity role is filled by C89. 4 residues coordinate L-glutamine: Q93, N169, D172, and H208. Residues H208 and E210 each act as for GATase activity in the active site. The region spanning 235–430 is the GMPS ATP-PPase domain; sequence FDPIRYHELE…LNLPEEITNR (196 aa). 262-268 serves as a coordination point for ATP; the sequence is SGGIDST. XMP is bound by residues R336, Q476, K547, I552, and E553.

In terms of assembly, homodimer (via the GMPS ATP-PPase domain). It depends on Mg(2+) as a cofactor.

It carries out the reaction XMP + L-glutamine + ATP + H2O = GMP + L-glutamate + AMP + diphosphate + 2 H(+). It functions in the pathway purine metabolism; GMP biosynthesis; GMP from XMP (L-Gln route): step 1/1. Its activity is regulated as follows. The GATase domain is allosterically activated by the binding of substrates, ATP and XMP, to the ATPPase domain, thus ensuring that glutamine hydrolysis occurs only when the ATPPase domain is primed to receive ammonia. Inhibited by Na(+). Inhibited by the reaction product GMP. Catalyzes the conversion of xanthine monophosphate (XMP) to GMP in the presence of glutamine and ATP through an adenyl-XMP intermediate, which is the final step of de novo synthesis of GMP. The conversion of XMP to GMP involves the coordinated action of the glutamine amidotransferase (GATase) domain that catalyzes the hydrolysis of the amide side chain of glutamine producing ammonia and the ATP pyrophosphatase (ATPPase) domain that catalyzes the synthesis of adenyl-XMP intermediate from ATP. The ammonia produced by the GATase domain is tunnelled to the ATP-PPase domain where it attacks the adenyl-XMP intermediate generating GMP. This is GMP synthase [glutamine-hydrolyzing] from Plasmodium falciparum (isolate 3D7).